Consider the following 277-residue polypeptide: MENVGVGMPFYDLGQTRVYPLLSDFHDLSAERYPVGFMDLLGVHRHTPTHTPLMHFPTTPNSSSSEAVNGDDEEEEDGEEQQHKTKKRFKFTKMSRKQTKKKVPKVSFITRSEVLHLDDGYKWRKYGQKPVKDSPFPRNYYRCTTTWCDVKKRVERSFSDPSSVITTYEGQHTHPRPLLIMPKEGSSPSNGSASRAHIGLPTLPPQLLDYNNQQQQAPSSFGTEYINRQEKGINHDDDDDHVVKKSRTRDLLDGAGLVKDHGLLQDVVPSHIIKEEY.

A disordered region spans residues 51–96 (TPLMHFPTTPNSSSSEAVNGDDEEEEDGEEQQHKTKKRFKFTKMSR). A compositionally biased stretch (polar residues) spans 58–67 (TTPNSSSSEA). A compositionally biased stretch (acidic residues) spans 69–79 (NGDDEEEEDGE). Residues 84–96 (KTKKRFKFTKMSR) show a composition bias toward basic residues. Positions 112–177 (SEVLHLDDGY…YEGQHTHPRP (66 aa)) form a DNA-binding region, WRKY. The interval 183 to 206 (KEGSSPSNGSASRAHIGLPTLPPQ) is disordered.

The protein belongs to the WRKY group II-c family.

It localises to the nucleus. Transcription factor. Interacts specifically with the W box (5'-(T)TGAC[CT]-3'), a frequently occurring elicitor-responsive cis-acting element. The sequence is that of WRKY transcription factor 68 (WRKY68) from Arabidopsis thaliana (Mouse-ear cress).